We begin with the raw amino-acid sequence, 818 residues long: RNA-directed RNA polymerase (818 aa).

Positions 524-641 (PVAIGLDASR…IVERRNLKQI (118 aa)) constitute a RdRp catalytic domain.

Belongs to the tombusviridae RNA polymerase family.

It carries out the reaction RNA(n) + a ribonucleoside 5'-triphosphate = RNA(n+1) + diphosphate. Its function is as follows. RNA-dependent RNA polymerase that plays an essential role in the virus replication. The chain is RNA-directed RNA polymerase from Tomato bushy stunt virus (strain Cherry) (TBSV).